Reading from the N-terminus, the 619-residue chain is Vitamin B12 transporter BtuB (619 aa).

The first 25 residues, 1–25 (MINKKRLLLSTVSIMVISGWNQASA), serve as a signal peptide directing secretion. The short motif at 31-38 (DSLVVTAS) is the TonB box element. In terms of domain architecture, TBDR plug spans 43 to 157 (PISSILAPYT…IGGVINIITT (115 aa)). Residues leucine 88, serine 90, and 115–116 (IS) each bind cyanocob(III)alamin. The 460-residue stretch at 160 to 619 (KLGTSLNVGI…EYYLTGSYNF (460 aa)) folds into the TBDR beta-barrel domain. The next 3 beta stranded transmembrane spans lie at 163–170 (TSLNVGIG), 174–183 (YQTYDGATQQ), and 189–200 (TVLTAAANYTYT). Ca(2+) contacts are provided by aspartate 204, glutamine 216, aspartate 218, and aspartate 220. A run of 2 beta stranded transmembrane segments spans residues 222 to 232 (FMSKMLWLGVD) and 237 to 253 (EQVSGFVRAYGYNNRTS). Residues tyrosine 254 and aspartate 255 each coordinate Ca(2+). Residue alanine 256 participates in cyanocob(III)alamin binding. A Ca(2+)-binding site is contributed by aspartate 268. 17 beta stranded membrane-spanning segments follow: residues 270–284 (RELYSRHYDMGVRFN), 286–303 (GIYSSQLITSYSHTKDYN), 316–332 (SLNDSEQYNLQWGNTFQ), 335–344 (QGIVSTGVDF), 360–376 (KTVRNTGMYLTAQQQLK), 378–388 (FILEGAIRSDK), 392–407 (AGWNTTWQASLGWEFI), 410–424 (YRLIASYGTAFKAPT), 441–450 (ESKQWEGGIE), 456–465 (LTWRMTVYRN), 478–495 (YYNIGKAKIKGVEWTGLI), 499–514 (MFQHQLTIQYIDPRNS), 522–534 (RRAKQQVKYQLDW), 540–556 (DWGLTYQYLGRRYDKDF), 563–577 (RVKLGGVSFWDLTVS), 590–601 (IANLLDKDYETV), and 607–619 (PGREYYLTGSYNF). Residue serine 316 participates in cyanocob(III)alamin binding. Cyanocob(III)alamin is bound at residue arginine 522. The short motif at 602-619 (YGYRIPGREYYLTGSYNF) is the TonB C-terminal box element.

It belongs to the TonB-dependent receptor family. BtuB (TC 1.B.14.3.1) subfamily.

It is found in the cell outer membrane. Its function is as follows. Involved in the active translocation of vitamin B12 (cyanocobalamin) across the outer membrane to the periplasmic space. It derives its energy for transport by interacting with the trans-periplasmic membrane protein TonB. This chain is Vitamin B12 transporter BtuB, found in Photorhabdus laumondii subsp. laumondii (strain DSM 15139 / CIP 105565 / TT01) (Photorhabdus luminescens subsp. laumondii).